The primary structure comprises 206 residues: Large ribosomal subunit protein uL4 (206 aa).

Positions 47 to 71 (TRAQKGRSEVAGSTRKQWRQKGTGR) are disordered.

This sequence belongs to the universal ribosomal protein uL4 family. As to quaternary structure, part of the 50S ribosomal subunit.

Its function is as follows. One of the primary rRNA binding proteins, this protein initially binds near the 5'-end of the 23S rRNA. It is important during the early stages of 50S assembly. It makes multiple contacts with different domains of the 23S rRNA in the assembled 50S subunit and ribosome. In terms of biological role, forms part of the polypeptide exit tunnel. This chain is Large ribosomal subunit protein uL4, found in Nitrosomonas eutropha (strain DSM 101675 / C91 / Nm57).